The chain runs to 771 residues: ATP-dependent RNA helicase DRS1 (771 aa).

Disordered regions lie at residues 1 to 96, 109 to 128, and 134 to 233; these read MAKK…LDGF, VESN…DLDG, and GGLA…KPVE. A compositionally biased stretch (acidic residues) spans 28–46; sequence SDSEGENEIPDLEEESEVD. The stretch at 33-84 forms a coiled coil; the sequence is ENEIPDLEEESEVDQELKEEEKPKPKPKPKSKKNKKNKDINNDQEKTEEQEE. Residues 47–56 are compositionally biased toward basic and acidic residues; the sequence is QELKEEEKPK. Over residues 57 to 68 the composition is skewed to basic residues; sequence PKPKPKSKKNKK. Positions 69 to 79 are enriched in basic and acidic residues; sequence NKDINNDQEKT. A compositionally biased stretch (polar residues) spans 85–96; it reads INPNFTFSLDGF. Composition is skewed to acidic residues over residues 149 to 182 and 197 to 233; these read KNDE…DELA and ADDD…KPVE. Positions 258 to 286 match the Q motif motif; that stretch reads TTFQSLQLSRPVLKGLSQLGYTKPSPIQS. The Helicase ATP-binding domain occupies 289 to 465; sequence IPIALLGKDI…QLSLQKPVRV (177 aa). Residue 302–309 coordinates ATP; the sequence is AVTGSGKT. A DEAD box motif is present at residues 412-415; that stretch reads DEAD. One can recognise a Helicase C-terminal domain in the interval 476–643; it reads KLVQEFVRIR…RNSKQGKAVS (168 aa). Over residues 695–717 the composition is skewed to basic and acidic residues; sequence EKEIQSRPRRTWFESEKDKKHQT. The tract at residues 695–771 is disordered; it reads EKEIQSRPRR…KPKSNGKNKK (77 aa). Basic residues-rich tracts occupy residues 725–736 and 759–771; these read KHGKKVNSHKRK and VQKK…KNKK.

This sequence belongs to the DEAD box helicase family. DDX27/DRS1 subfamily. In terms of assembly, associates with pre-ribosomal particles.

It is found in the nucleus. It localises to the nucleolus. It carries out the reaction ATP + H2O = ADP + phosphate + H(+). ATP-binding RNA helicase involved in ribosome assembly. The sequence is that of ATP-dependent RNA helicase DRS1 (DRS1) from Debaryomyces hansenii (strain ATCC 36239 / CBS 767 / BCRC 21394 / JCM 1990 / NBRC 0083 / IGC 2968) (Yeast).